A 418-amino-acid polypeptide reads, in one-letter code: Glutamyl-tRNA reductase (418 aa).

Substrate contacts are provided by residues 49–52, S109, 114–116, and Q120; these read TCNR and EPQ. C50 serves as the catalytic Nucleophile. NADP(+) is bound at residue 189–194; sequence GAGETI.

Belongs to the glutamyl-tRNA reductase family. Homodimer.

The enzyme catalyses (S)-4-amino-5-oxopentanoate + tRNA(Glu) + NADP(+) = L-glutamyl-tRNA(Glu) + NADPH + H(+). Its pathway is porphyrin-containing compound metabolism; protoporphyrin-IX biosynthesis; 5-aminolevulinate from L-glutamyl-tRNA(Glu): step 1/2. In terms of biological role, catalyzes the NADPH-dependent reduction of glutamyl-tRNA(Glu) to glutamate 1-semialdehyde (GSA). This chain is Glutamyl-tRNA reductase, found in Klebsiella pneumoniae subsp. pneumoniae (strain ATCC 700721 / MGH 78578).